A 353-amino-acid polypeptide reads, in one-letter code: Photosystem II protein D1 (353 aa).

Residue T2 is modified to N-acetylthreonine. T2 carries the post-translational modification Phosphothreonine. The next 3 helical transmembrane spans lie at 29–46 (YIGW…TATS), 118–133 (HFLL…EWEL), and 142–156 (WIAV…AATA). H118 provides a ligand contact to chlorophyll a. Y126 contacts pheophytin a. The [CaMn4O5] cluster site is built by D170 and E189. The chain crosses the membrane as a helical span at residues 197–218 (FHMLGVAGVFGGSLFSAMHGSL). Residue H198 participates in chlorophyll a binding. A quinone is bound by residues H215 and 264 to 265 (SF). H215 provides a ligand contact to Fe cation. H272 serves as a coordination point for Fe cation. Residues 274-288 (FLAAWPVVGIWFTAL) form a helical membrane-spanning segment. H332, E333, D342, and A344 together coordinate [CaMn4O5] cluster. Residues 345 to 353 (SVEAPSVNA) constitute a propeptide that is removed on maturation.

The protein belongs to the reaction center PufL/M/PsbA/D family. As to quaternary structure, PSII is composed of 1 copy each of membrane proteins PsbA, PsbB, PsbC, PsbD, PsbE, PsbF, PsbH, PsbI, PsbJ, PsbK, PsbL, PsbM, PsbT, PsbX, PsbY, PsbZ, Psb30/Ycf12, at least 3 peripheral proteins of the oxygen-evolving complex and a large number of cofactors. It forms dimeric complexes. It depends on The D1/D2 heterodimer binds P680, chlorophylls that are the primary electron donor of PSII, and subsequent electron acceptors. It shares a non-heme iron and each subunit binds pheophytin, quinone, additional chlorophylls, carotenoids and lipids. D1 provides most of the ligands for the Mn4-Ca-O5 cluster of the oxygen-evolving complex (OEC). There is also a Cl(-1) ion associated with D1 and D2, which is required for oxygen evolution. The PSII complex binds additional chlorophylls, carotenoids and specific lipids. as a cofactor. Tyr-161 forms a radical intermediate that is referred to as redox-active TyrZ, YZ or Y-Z. Post-translationally, C-terminally processed by CTPA; processing is essential to allow assembly of the oxygen-evolving complex and thus photosynthetic growth.

The protein resides in the plastid. The protein localises to the chloroplast thylakoid membrane. It carries out the reaction 2 a plastoquinone + 4 hnu + 2 H2O = 2 a plastoquinol + O2. Photosystem II (PSII) is a light-driven water:plastoquinone oxidoreductase that uses light energy to abstract electrons from H(2)O, generating O(2) and a proton gradient subsequently used for ATP formation. It consists of a core antenna complex that captures photons, and an electron transfer chain that converts photonic excitation into a charge separation. The D1/D2 (PsbA/PsbD) reaction center heterodimer binds P680, the primary electron donor of PSII as well as several subsequent electron acceptors. The polypeptide is Photosystem II protein D1 (Oltmannsiellopsis viridis (Marine flagellate)).